The primary structure comprises 131 residues: Small ribosomal subunit protein uS8 (131 aa).

The protein belongs to the universal ribosomal protein uS8 family. As to quaternary structure, part of the 30S ribosomal subunit. Contacts proteins S5 and S12.

In terms of biological role, one of the primary rRNA binding proteins, it binds directly to 16S rRNA central domain where it helps coordinate assembly of the platform of the 30S subunit. The chain is Small ribosomal subunit protein uS8 from Dechloromonas aromatica (strain RCB).